We begin with the raw amino-acid sequence, 403 residues long: Dihydroorotase (403 aa).

The Zn(2+) site is built by His-48 and His-50. Residues 50-52 and Asn-82 each bind substrate; that span reads HLR. The Zn(2+) site is built by Glu-140, His-172, His-211, and Asp-277. Asp-277 is an active-site residue. His-281 serves as a coordination point for substrate.

It belongs to the metallo-dependent hydrolases superfamily. DHOase family. Class I DHOase subfamily. Zn(2+) is required as a cofactor.

The enzyme catalyses (S)-dihydroorotate + H2O = N-carbamoyl-L-aspartate + H(+). Its pathway is pyrimidine metabolism; UMP biosynthesis via de novo pathway; (S)-dihydroorotate from bicarbonate: step 3/3. Functionally, catalyzes the reversible cyclization of carbamoyl aspartate to dihydroorotate. The polypeptide is Dihydroorotase (Archaeoglobus fulgidus (strain ATCC 49558 / DSM 4304 / JCM 9628 / NBRC 100126 / VC-16)).